The sequence spans 412 residues: Multifunctional CCA protein (412 aa).

The ATP site is built by glycine 8 and arginine 11. Residues glycine 8 and arginine 11 each contribute to the CTP site. Residues aspartate 21 and aspartate 23 each contribute to the Mg(2+) site. Residues arginine 91, arginine 137, and arginine 140 each contribute to the ATP site. CTP-binding residues include arginine 91, arginine 137, and arginine 140. Residues 225–326 form the HD domain; the sequence is TGIHVMMVID…ADMLQATDAY (102 aa).

Belongs to the tRNA nucleotidyltransferase/poly(A) polymerase family. Bacterial CCA-adding enzyme type 1 subfamily. Monomer. Can also form homodimers and oligomers. Mg(2+) is required as a cofactor. Ni(2+) serves as cofactor.

The catalysed reaction is a tRNA precursor + 2 CTP + ATP = a tRNA with a 3' CCA end + 3 diphosphate. The enzyme catalyses a tRNA with a 3' CCA end + 2 CTP + ATP = a tRNA with a 3' CCACCA end + 3 diphosphate. In terms of biological role, catalyzes the addition and repair of the essential 3'-terminal CCA sequence in tRNAs without using a nucleic acid template. Adds these three nucleotides in the order of C, C, and A to the tRNA nucleotide-73, using CTP and ATP as substrates and producing inorganic pyrophosphate. tRNA 3'-terminal CCA addition is required both for tRNA processing and repair. Also involved in tRNA surveillance by mediating tandem CCA addition to generate a CCACCA at the 3' terminus of unstable tRNAs. While stable tRNAs receive only 3'-terminal CCA, unstable tRNAs are marked with CCACCA and rapidly degraded. This is Multifunctional CCA protein from Nitrosomonas europaea (strain ATCC 19718 / CIP 103999 / KCTC 2705 / NBRC 14298).